A 272-amino-acid chain; its full sequence is Pyrroline-5-carboxylate reductase 3 (272 aa).

It belongs to the pyrroline-5-carboxylate reductase family.

The protein localises to the cytoplasm. It catalyses the reaction L-proline + NADP(+) = (S)-1-pyrroline-5-carboxylate + NADPH + 2 H(+). It carries out the reaction L-proline + NAD(+) = (S)-1-pyrroline-5-carboxylate + NADH + 2 H(+). The protein operates within amino-acid biosynthesis; L-proline biosynthesis; L-proline from L-glutamate 5-semialdehyde: step 1/1. Catalyzes the reduction of 1-pyrroline-5-carboxylate (PCA) to L-proline. The chain is Pyrroline-5-carboxylate reductase 3 (proG) from Bacillus subtilis (strain 168).